The chain runs to 24 residues: Iron-regulated 31 kDa protein (24 aa).

It is found in the periplasm. May be involved in iron uptake. In Haemophilus influenzae, this protein is Iron-regulated 31 kDa protein.